We begin with the raw amino-acid sequence, 309 residues long: Malate dehydrogenase (309 aa).

Residues glycine 9–glycine 14 and aspartate 33 contribute to the NAD(+) site. Arginine 82 and arginine 88 together coordinate substrate. Residues asparagine 95 and valine 118–asparagine 120 contribute to the NAD(+) site. 2 residues coordinate substrate: asparagine 120 and arginine 151. The active-site Proton acceptor is histidine 175.

It belongs to the LDH/MDH superfamily. MDH type 3 family.

The catalysed reaction is (S)-malate + NAD(+) = oxaloacetate + NADH + H(+). Functionally, catalyzes the reversible oxidation of malate to oxaloacetate. The polypeptide is Malate dehydrogenase (Roseiflexus sp. (strain RS-1)).